Reading from the N-terminus, the 440-residue chain is Tyrosine--tRNA ligase (440 aa).

Position 46 (Y46) interacts with L-tyrosine. A 'HIGH' region motif is present at residues 51 to 60 (PTAASLHIGN). Residues Y181 and Q185 each contribute to the L-tyrosine site. The short motif at 241–245 (KFGKS) is the 'KMSKS' region element. K244 serves as a coordination point for ATP. The 67-residue stretch at 373-439 (DRVIDAAQAA…GKKALGAVEN (67 aa)) folds into the S4 RNA-binding domain.

This sequence belongs to the class-I aminoacyl-tRNA synthetase family. TyrS type 1 subfamily. In terms of assembly, homodimer.

It localises to the cytoplasm. It catalyses the reaction tRNA(Tyr) + L-tyrosine + ATP = L-tyrosyl-tRNA(Tyr) + AMP + diphosphate + H(+). Functionally, catalyzes the attachment of tyrosine to tRNA(Tyr) in a two-step reaction: tyrosine is first activated by ATP to form Tyr-AMP and then transferred to the acceptor end of tRNA(Tyr). This is Tyrosine--tRNA ligase from Bifidobacterium longum subsp. infantis (strain ATCC 15697 / DSM 20088 / JCM 1222 / NCTC 11817 / S12).